The chain runs to 892 residues: Dipeptidyl peptidase 8 (892 aa).

Active-site charge relay system residues include Ser749, Asp827, and His859.

It belongs to the peptidase S9B family. DPPIV subfamily. Homodimer. Forms a ternary complex with NLRP1, composed of a DPP8 homodimer, one full-length NLRP1 protein, and one cleaved C-terminus of NLRP1 (NACHT, LRR and PYD domains-containing protein 1, C-terminus). Forms a ternary complex with CARD8, composed of a DPP8 homodimer, one full-length NLRP1 protein, and one cleaved C-terminus of CARD8 (Caspase recruitment domain-containing protein 8, C-terminus). In the ternary complex, only one subunit of the DPP8 homodimer is bound to NLRP1 or CARD8.

It localises to the cytoplasm. It carries out the reaction Release of an N-terminal dipeptide, Xaa-Yaa-|-Zaa-, from a polypeptide, preferentially when Yaa is Pro, provided Zaa is neither Pro nor hydroxyproline.. Its activity is regulated as follows. Inhibited by zinc. Inhibited by the serine proteinase inhibitor 4-(2-aminoethyl)benzenesulphonyl fluoride (AEBSF), and by di-isopropylfluorophosphate. Specifically inhibited by isoindoline derivatives. Inhibited by Val-boroPro (Talabostat, PT-100), a non-selective inhibitor, which triggers pyroptosis in monocytes and macrophages. In terms of biological role, dipeptidyl peptidase that cleaves off N-terminal dipeptides from proteins having a Pro or Ala residue at position 2. Acts as a key inhibitor of caspase-1-dependent monocyte and macrophage pyroptosis in resting cells by preventing activation of NLRP1 and CARD8. Sequesters the cleaved C-terminal part of NLRP1 and CARD8, which respectively constitute the active part of the NLRP1 and CARD8 inflammasomes, in a ternary complex, thereby preventing their oligomerization and activation. The dipeptidyl peptidase activity is required to suppress NLRP1 and CARD8; however, neither NLRP1 nor CARD8 are bona fide substrates of DPP8, suggesting the existence of substrate(s) required for NLRP1 and CARD8 inhibition. This Mus musculus (Mouse) protein is Dipeptidyl peptidase 8.